Consider the following 226-residue polypeptide: 2-dehydro-3-deoxy-phosphogluconate aldolase (226 aa).

E57 functions as the Proton acceptor in the catalytic mechanism. 3 residues coordinate pyruvate: R61, T85, and K145. Residue K145 is the Schiff-base intermediate with substrate of the active site.

It belongs to the KHG/KDPG aldolase family. As to quaternary structure, homotrimer.

The enzyme catalyses 2-dehydro-3-deoxy-6-phospho-D-gluconate = D-glyceraldehyde 3-phosphate + pyruvate. The protein operates within carbohydrate acid metabolism; 2-dehydro-3-deoxy-D-gluconate degradation; D-glyceraldehyde 3-phosphate and pyruvate from 2-dehydro-3-deoxy-D-gluconate: step 2/2. In terms of biological role, involved in the degradation of glucose via the Entner-Doudoroff pathway. Catalyzes the reversible, stereospecific retro-aldol cleavage of 2-keto-3-deoxy-6-phosphogluconate (KDPG) to pyruvate and D-glyceraldehyde-3-phosphate. The polypeptide is 2-dehydro-3-deoxy-phosphogluconate aldolase (Pseudomonas putida (Arthrobacter siderocapsulatus)).